A 348-amino-acid chain; its full sequence is NADH-quinone oxidoreductase subunit H (348 aa).

The next 8 helical transmembrane spans lie at 21–41 (IAGILLIALPVMLAVAMVIYV), 87–107 (GIFLLAPIVTFVVALVAWAVI), 120–140 (VGLLYVLAISSLGVYGIVMAG), 166–186 (IGFILICVVLWAGTFNLSEIV), 195–215 (GIVNGYFFNILLFPMWVLFFI), 258–278 (NILLLCSLNTVLFFGGWLPPI), 288–308 (GFLWFLIKTFLFFFMFSWIWA), and 325–345 (VFLPMSLLFVFLISGYLMATG).

This sequence belongs to the complex I subunit 1 family. As to quaternary structure, NDH-1 is composed of 14 different subunits. Subunits NuoA, H, J, K, L, M, N constitute the membrane sector of the complex.

The protein localises to the cell inner membrane. It catalyses the reaction a quinone + NADH + 5 H(+)(in) = a quinol + NAD(+) + 4 H(+)(out). In terms of biological role, NDH-1 shuttles electrons from NADH, via FMN and iron-sulfur (Fe-S) centers, to quinones in the respiratory chain. The immediate electron acceptor for the enzyme in this species is believed to be ubiquinone. Couples the redox reaction to proton translocation (for every two electrons transferred, four hydrogen ions are translocated across the cytoplasmic membrane), and thus conserves the redox energy in a proton gradient. This subunit may bind ubiquinone. This Erythrobacter litoralis (strain HTCC2594) protein is NADH-quinone oxidoreductase subunit H.